A 214-amino-acid polypeptide reads, in one-letter code: Mediator of RNA polymerase II transcription subunit 29 (214 aa).

Positions 1-78 (MMNQMGMHMQ…QQQSQQTEKV (78 aa)) are disordered. Residues 15–34 (VPGGPGGPVGMAGGPVGGVG) are compositionally biased toward gly residues. Low complexity predominate over residues 44–74 (QMQQQQQVAAQQQQQQQQQQQAQAHQQQSQQ).

Belongs to the Mediator complex subunit 29 family. In terms of assembly, component of the Mediator complex.

It is found in the nucleus. In terms of biological role, component of the Mediator complex, a coactivator involved in the regulated transcription of nearly all RNA polymerase II-dependent genes. Mediator functions as a bridge to convey information from gene-specific regulatory proteins to the basal RNA polymerase II transcription machinery. Mediator is recruited to promoters by direct interactions with regulatory proteins and serves as a scaffold for the assembly of a functional preinitiation complex with RNA polymerase II and the general transcription factors. The sequence is that of Mediator of RNA polymerase II transcription subunit 29 (ix) from Aedes aegypti (Yellowfever mosquito).